Reading from the N-terminus, the 269-residue chain is Phosphatidylglycerol--prolipoprotein diacylglyceryl transferase (269 aa).

The next 7 membrane-spanning stretches (helical) occupy residues 17–37 (LKIH…WLLA), 56–76 (LVFW…VLFY), 92–112 (WKGG…ALWF), 120–140 (FFEL…AGRI), 174–194 (PSQL…LWLY), 202–222 (MAVS…VEFV), and 237–257 (LTMG…LIWL). A 1,2-diacyl-sn-glycero-3-phospho-(1'-sn-glycerol) is bound at residue Arg-139.

The protein belongs to the Lgt family.

It localises to the cell inner membrane. It catalyses the reaction L-cysteinyl-[prolipoprotein] + a 1,2-diacyl-sn-glycero-3-phospho-(1'-sn-glycerol) = an S-1,2-diacyl-sn-glyceryl-L-cysteinyl-[prolipoprotein] + sn-glycerol 1-phosphate + H(+). The protein operates within protein modification; lipoprotein biosynthesis (diacylglyceryl transfer). Catalyzes the transfer of the diacylglyceryl group from phosphatidylglycerol to the sulfhydryl group of the N-terminal cysteine of a prolipoprotein, the first step in the formation of mature lipoproteins. This is Phosphatidylglycerol--prolipoprotein diacylglyceryl transferase from Pseudomonas putida (strain W619).